The primary structure comprises 475 residues: Ankyrin repeat, SAM and basic leucine zipper domain-containing protein 1 (475 aa).

Residues 1–25 form a disordered region; the sequence is MAAGALRGLPVAGGGESSESEDDGW. Residues S17, S18, and S20 each carry the phosphoserine modification. 6 ANK repeats span residues 45–74, 78–107, 110–144, 148–177, 181–210, and 214–243; these read EKKE…SVDS, YGWT…NASF, DKQS…DPNV, RLMT…EVNT, NGYT…NKML, and DGKM…PLEG. Residues 272-334 enclose the SAM domain; the sequence is SYTAFGDLEV…KILAALKELQ (63 aa).

Interacts with DDX4, PIWIL1, RANBP9 and TDRD1.

The protein localises to the cytoplasm. Its function is as follows. Plays a central role during spermatogenesis by repressing transposable elements and preventing their mobilization, which is essential for the germline integrity. Acts via the piRNA metabolic process, which mediates the repression of transposable elements during meiosis by forming complexes composed of piRNAs and Piwi proteins and governs the methylation and subsequent repression of transposons. Its association with pi-bodies suggests a participation in the primary piRNAs metabolic process. Required prior to the pachytene stage to facilitate the production of multiple types of piRNAs, including those associated with repeats involved in the regulation of retrotransposons. May act by mediating protein-protein interactions during germ cell maturation. The sequence is that of Ankyrin repeat, SAM and basic leucine zipper domain-containing protein 1 (ASZ1) from Nomascus leucogenys (Northern white-cheeked gibbon).